The sequence spans 203 residues: Small ribosomal subunit protein uS4 (203 aa).

The region spanning 93-156 (RRLDNVVYRL…LKVPAILEAV (64 aa)) is the S4 RNA-binding domain.

It belongs to the universal ribosomal protein uS4 family. In terms of assembly, part of the 30S ribosomal subunit. Contacts protein S5. The interaction surface between S4 and S5 is involved in control of translational fidelity.

One of the primary rRNA binding proteins, it binds directly to 16S rRNA where it nucleates assembly of the body of the 30S subunit. Its function is as follows. With S5 and S12 plays an important role in translational accuracy. This Streptococcus gordonii (strain Challis / ATCC 35105 / BCRC 15272 / CH1 / DL1 / V288) protein is Small ribosomal subunit protein uS4.